A 186-amino-acid polypeptide reads, in one-letter code: ADP-ribosylation factor-like protein 6 (186 aa).

A lipid anchor (N-myristoyl glycine) is attached at G2. GTP is bound by residues G24–T31, T50, D69–Q73, G72, N130–D133, and A164. T50 is a binding site for Mg(2+).

The protein belongs to the small GTPase superfamily. Arf family. Interacts with SEC61B, ARL6IP1, ARL6IP2, ARL6IP3, ARL6IP4 ARL6IP5 and ARL6IP6. Interacts (GTP-bound form) with the BBSome a complex that contains BBS1, BBS2, BBS4, BBS5, BBS7, BBS8/TTC8, BBS9 and BBIP10. Interacts (GTP-free form) with IFT27. Most abundant in brain and kidney. Expressed in heart and eye. Isoform 2 is expressed only in the retina.

The protein localises to the cell projection. The protein resides in the cilium membrane. Its subcellular location is the cytoplasm. It localises to the cytoskeleton. It is found in the cilium axoneme. The protein localises to the cilium basal body. Its function is as follows. Involved in membrane protein trafficking at the base of the ciliary organelle. Mediates recruitment onto plasma membrane of the BBSome complex which would constitute a coat complex required for sorting of specific membrane proteins to the primary cilia. Together with BBS1, is necessary for correct trafficking of PKD1 to primary cilia. Together with the BBSome complex and LTZL1, controls SMO ciliary trafficking and contributes to the sonic hedgehog (SHH) pathway regulation. May regulate cilia assembly and disassembly and subsequent ciliary signaling events such as the Wnt signaling cascade. Isoform 2 may be required for proper retinal function and organization. The sequence is that of ADP-ribosylation factor-like protein 6 (Arl6) from Mus musculus (Mouse).